Here is a 283-residue protein sequence, read N- to C-terminus: tRNA (guanine-N(1)-)-methyltransferase (283 aa).

S-adenosyl-L-methionine is bound by residues G113 and I133–L138.

This sequence belongs to the RNA methyltransferase TrmD family. Homodimer.

It localises to the cytoplasm. It carries out the reaction guanosine(37) in tRNA + S-adenosyl-L-methionine = N(1)-methylguanosine(37) in tRNA + S-adenosyl-L-homocysteine + H(+). Its function is as follows. Specifically methylates guanosine-37 in various tRNAs. The polypeptide is tRNA (guanine-N(1)-)-methyltransferase (Parafrankia sp. (strain EAN1pec)).